The following is a 134-amino-acid chain: Small ribosomal subunit protein uS8c (134 aa).

This sequence belongs to the universal ribosomal protein uS8 family. As to quaternary structure, part of the 30S ribosomal subunit.

The protein localises to the plastid. Its subcellular location is the chloroplast. One of the primary rRNA binding proteins, it binds directly to 16S rRNA central domain where it helps coordinate assembly of the platform of the 30S subunit. The chain is Small ribosomal subunit protein uS8c (rps8) from Arabidopsis thaliana (Mouse-ear cress).